Reading from the N-terminus, the 263-residue chain is MTEQEDTFSAVRFHKSSGLQNEMRLKETRKPEKARLRVCSVPWQLIVIALGILISLRLVTVAVLMTNIFQYGQQKHELKEFLKHHNNCSIMQSDINLKDELLKNKSIECNLLESLNRDQNILCDKTRTVLDYLQHTGRGVKVYWFCYGMKCYYFVMDRKPWSRCKQSCQNSSLTLLKIDDEDELKFLQLVVPSDSCWIGLSYDNKKKDWAWIDNRPSKLALNTTKYNIRDGGCMFLSKTRLDNNYCDQSFICICGKRLDKFPH.

At 1–44 (MTEQEDTFSAVRFHKSSGLQNEMRLKETRKPEKARLRVCSVPWQ) the chain is on the cytoplasmic side. A helical; Signal-anchor for type II membrane protein transmembrane segment spans residues 45 to 65 (LIVIALGILISLRLVTVAVLM). Residues 66–263 (TNIFQYGQQK…CGKRLDKFPH (198 aa)) lie on the Extracellular side of the membrane. Residues Asn-87 and Asn-104 are each glycosylated (N-linked (GlcNAc...) asparagine). The 120-residue stretch at 139–258 (GVKVYWFCYG…SFICICGKRL (120 aa)) folds into the C-type lectin domain. Intrachain disulfides connect Cys-146/Cys-151, Cys-164/Cys-252, Cys-168/Cys-254, and Cys-233/Cys-246. N-linked (GlcNAc...) asparagine glycans are attached at residues Asn-170 and Asn-222.

As to quaternary structure, homodimer; disulfide-linked. Interacts with the adapter protein TYROBP/DAP12; the interaction leads to natural killer cell activation.

The protein localises to the cell membrane. Its function is as follows. Receptor on natural killer (NK) cells for class I MHC. This is Killer cell lectin-like receptor 4 (Klra4) from Mus musculus (Mouse).